Reading from the N-terminus, the 118-residue chain is ATP synthase subunit g, mitochondrial (118 aa).

The protein belongs to the ATPase g subunit family. As to quaternary structure, F-type ATPases have 2 components, CF(1) - the catalytic core - and CF(0) - the membrane proton channel.

The protein resides in the mitochondrion membrane. Mitochondrial membrane ATP synthase (F(1)F(0) ATP synthase or Complex V) produces ATP from ADP in the presence of a proton gradient across the membrane which is generated by electron transport complexes of the respiratory chain. F-type ATPases consist of two structural domains, F(1) - containing the extramembraneous catalytic core, and F(0) - containing the membrane proton channel, linked together by a central stalk and a peripheral stalk. During catalysis, ATP synthesis in the catalytic domain of F(1) is coupled via a rotary mechanism of the central stalk subunits to proton translocation. Part of the complex F(0) domain. Minor subunit located with subunit a in the membrane. The sequence is that of ATP synthase subunit g, mitochondrial (atp20) from Schizosaccharomyces pombe (strain 972 / ATCC 24843) (Fission yeast).